Reading from the N-terminus, the 798-residue chain is Phenylalanine--tRNA ligase beta subunit (798 aa).

The tRNA-binding domain maps to 39–148; that stretch reads FDAIEPIVVG…ESFRIGARLV (110 aa). A B5 domain is found at 402 to 478; the sequence is WQAPVLRFRR…RVRGMDTIEP (77 aa). Mg(2+) is bound by residues aspartate 456, aspartate 462, glutamate 465, and glutamate 466. Residues 708 to 798 enclose the FDX-ACB domain; the sequence is PVYPPVRRDI…SLVEKLPVRI (91 aa).

The protein belongs to the phenylalanyl-tRNA synthetase beta subunit family. Type 1 subfamily. Tetramer of two alpha and two beta subunits. It depends on Mg(2+) as a cofactor.

It localises to the cytoplasm. The catalysed reaction is tRNA(Phe) + L-phenylalanine + ATP = L-phenylalanyl-tRNA(Phe) + AMP + diphosphate + H(+). This chain is Phenylalanine--tRNA ligase beta subunit, found in Nitratidesulfovibrio vulgaris (strain ATCC 29579 / DSM 644 / CCUG 34227 / NCIMB 8303 / VKM B-1760 / Hildenborough) (Desulfovibrio vulgaris).